Consider the following 342-residue polypeptide: Phosphate acyltransferase (342 aa).

This sequence belongs to the PlsX family. As to quaternary structure, homodimer. Probably interacts with PlsY.

It is found in the cytoplasm. It catalyses the reaction a fatty acyl-[ACP] + phosphate = an acyl phosphate + holo-[ACP]. Its pathway is lipid metabolism; phospholipid metabolism. Catalyzes the reversible formation of acyl-phosphate (acyl-PO(4)) from acyl-[acyl-carrier-protein] (acyl-ACP). This enzyme utilizes acyl-ACP as fatty acyl donor, but not acyl-CoA. The sequence is that of Phosphate acyltransferase from Shewanella putrefaciens (strain CN-32 / ATCC BAA-453).